Here is an 806-residue protein sequence, read N- to C-terminus: Glycerol-3-phosphate acyltransferase (806 aa).

An HXXXXD motif motif is present at residues 305–310 (CHRSHM).

The protein belongs to the GPAT/DAPAT family.

The protein localises to the cell inner membrane. The enzyme catalyses sn-glycerol 3-phosphate + an acyl-CoA = a 1-acyl-sn-glycero-3-phosphate + CoA. The protein operates within phospholipid metabolism; CDP-diacylglycerol biosynthesis; CDP-diacylglycerol from sn-glycerol 3-phosphate: step 1/3. In Salmonella arizonae (strain ATCC BAA-731 / CDC346-86 / RSK2980), this protein is Glycerol-3-phosphate acyltransferase.